We begin with the raw amino-acid sequence, 104 residues long: Ubiquitin-related modifier 1 homolog (104 aa).

1-thioglycine is present on Gly104. A Glycyl lysine isopeptide (Gly-Lys) (interchain with K-? in acceptor proteins) cross-link involves residue Gly104.

The protein belongs to the URM1 family. In terms of assembly, interacts with cer. C-terminal thiocarboxylation occurs in 2 steps, it is first acyl-adenylated (-COAMP) via the hesA/moeB/thiF part of the MOCS3 homolog, then thiocarboxylated (-COSH) via the rhodanese domain of the MOCS3 homolog.

It localises to the cytoplasm. The protein operates within tRNA modification; 5-methoxycarbonylmethyl-2-thiouridine-tRNA biosynthesis. Its function is as follows. Acts as a sulfur carrier required for 2-thiolation of mcm(5)S(2)U at tRNA wobble positions of cytosolic tRNA(Lys), tRNA(Glu) and tRNA(Gln). Serves as sulfur donor in tRNA 2-thiolation reaction by being thiocarboxylated (-COSH) at its C-terminus by MOCS3. The sulfur is then transferred to tRNA to form 2-thiolation of mcm(5)S(2)U. Also acts as a ubiquitin-like protein (UBL) that is covalently conjugated via an isopeptide bond to lysine residues of target proteins such as Prx2/Jafrac1, Ciao1, Eip71CD and GILT1. The thiocarboxylated form serves as substrate for conjugation and oxidative stress specifically induces the formation of UBL-protein conjugates. This chain is Ubiquitin-related modifier 1 homolog, found in Drosophila grimshawi (Hawaiian fruit fly).